The following is a 93-amino-acid chain: Small ribosomal subunit protein uS19 (93 aa).

Belongs to the universal ribosomal protein uS19 family.

Its function is as follows. Protein S19 forms a complex with S13 that binds strongly to the 16S ribosomal RNA. This is Small ribosomal subunit protein uS19 from Agathobacter rectalis (strain ATCC 33656 / DSM 3377 / JCM 17463 / KCTC 5835 / VPI 0990) (Eubacterium rectale).